We begin with the raw amino-acid sequence, 324 residues long: MKPLKILFAGTPDFAARHLQALIDSEHQVIGVYSQPDRPAGRGKKLQASPVKALALEHDIPVYQPVSLRNEDAQAELAALGADIMVVVAYGLILPQVVLDTPRLGCINVHGSILPRWRGAAPIQRALWAGDAATGVTIMQMDIGLDTGDMLLKTHLPIEDRDTSASLYEKLAEQGPSALIQALKGLAEGSLTPEPQDEALANYAEKLSKEEAQLDWRKPAEQLWREVRAFNPWPASHFPHQDAAIKVWQASVSIEAAKQAPGTIIRADKQGIAVATGEGALVLETIQLPGKKAMAVADVLNARGDWFTPGTQLQGVTPADEAQA.

112–115 contributes to the (6S)-5,6,7,8-tetrahydrofolate binding site; sequence SILP.

The protein belongs to the Fmt family.

It catalyses the reaction L-methionyl-tRNA(fMet) + (6R)-10-formyltetrahydrofolate = N-formyl-L-methionyl-tRNA(fMet) + (6S)-5,6,7,8-tetrahydrofolate + H(+). In terms of biological role, attaches a formyl group to the free amino group of methionyl-tRNA(fMet). The formyl group appears to play a dual role in the initiator identity of N-formylmethionyl-tRNA by promoting its recognition by IF2 and preventing the misappropriation of this tRNA by the elongation apparatus. This Shewanella loihica (strain ATCC BAA-1088 / PV-4) protein is Methionyl-tRNA formyltransferase.